Here is a 399-residue protein sequence, read N- to C-terminus: Probable peptidoglycan glycosyltransferase FtsW (399 aa).

9 helical membrane passes run 19 to 39, 61 to 81, 85 to 105, 114 to 134, 160 to 180, 198 to 218, 285 to 305, 314 to 334, and 350 to 370; these read PLPV…VMIS, ILFA…PVSW, SGWL…TPLG, WIPM…CLIA, VLGV…TVVL, FMPL…TQPY, LLGA…GLVI, MAFG…QAGI, and LPLV…IAVI.

It belongs to the SEDS family. FtsW subfamily.

It localises to the cell inner membrane. The catalysed reaction is [GlcNAc-(1-&gt;4)-Mur2Ac(oyl-L-Ala-gamma-D-Glu-L-Lys-D-Ala-D-Ala)](n)-di-trans,octa-cis-undecaprenyl diphosphate + beta-D-GlcNAc-(1-&gt;4)-Mur2Ac(oyl-L-Ala-gamma-D-Glu-L-Lys-D-Ala-D-Ala)-di-trans,octa-cis-undecaprenyl diphosphate = [GlcNAc-(1-&gt;4)-Mur2Ac(oyl-L-Ala-gamma-D-Glu-L-Lys-D-Ala-D-Ala)](n+1)-di-trans,octa-cis-undecaprenyl diphosphate + di-trans,octa-cis-undecaprenyl diphosphate + H(+). It participates in cell wall biogenesis; peptidoglycan biosynthesis. In terms of biological role, peptidoglycan polymerase that is essential for cell division. The polypeptide is Probable peptidoglycan glycosyltransferase FtsW (Marinobacter nauticus (strain ATCC 700491 / DSM 11845 / VT8) (Marinobacter aquaeolei)).